A 272-amino-acid chain; its full sequence is Bis(5'-nucleosyl)-tetraphosphatase, symmetrical (272 aa).

The protein belongs to the Ap4A hydrolase family.

The catalysed reaction is P(1),P(4)-bis(5'-adenosyl) tetraphosphate + H2O = 2 ADP + 2 H(+). Its function is as follows. Hydrolyzes diadenosine 5',5'''-P1,P4-tetraphosphate to yield ADP. The sequence is that of Bis(5'-nucleosyl)-tetraphosphatase, symmetrical from Wigglesworthia glossinidia brevipalpis.